The chain runs to 749 residues: Cytosolic phospholipase A2 (749 aa).

The region spanning 1–124 (MASIDPYQHI…GEKKQVPFTF (124 aa)) is the C2 domain. The segment at 1 to 178 (MASIDPYQHI…LRKLLGPEKT (178 aa)) is phospholipid binding. Ca(2+)-binding residues include D40, T41, D43, N65, D93, A94, and N95. The PLA2c domain occupies 138-740 (VCSSTDLRFS…NDVEARKLLH (603 aa)). S229 (nucleophile) is an active-site residue. Residues 417 to 458 (MEEEIENLKPKHILGNDSSDSDDEMQEPKGTENSKAEEEYQR) form a disordered region. Residues 442–457 (QEPKGTENSKAEEEYQ) are compositionally biased toward basic and acidic residues. Residue D549 is the Proton acceptor of the active site.

The protein resides in the cytoplasm. It is found in the cytoplasmic vesicle. It carries out the reaction a 1,2-diacyl-sn-glycero-3-phosphocholine + H2O = a 1-acyl-sn-glycero-3-phosphocholine + a fatty acid + H(+). It catalyses the reaction a 1-acyl-sn-glycero-3-phosphocholine + H2O = sn-glycerol 3-phosphocholine + a fatty acid + H(+). With respect to regulation, stimulated by agonists such as ATP, EGF, thrombin and bradykinin as well as by cytosolic Ca(2+). Functionally, selectively hydrolyzes arachidonyl phospholipids in the sn-2 position releasing arachidonic acid. Together with its lysophospholipid activity, it is implicated in the initiation of the inflammatory response. This chain is Cytosolic phospholipase A2 (pla2g4a), found in Xenopus tropicalis (Western clawed frog).